We begin with the raw amino-acid sequence, 1843 residues long: Proteasome activator complex subunit 4 (1843 aa).

Low complexity predominate over residues 1-11 (MEPAERAGVGE). The segment at 1–25 (MEPAERAGVGEPPEPGGRPEPGPRG) is disordered. A compositionally biased stretch (pro residues) spans 12–22 (PPEPGGRPEPG). 2 HEAT repeats span residues 475–519 (PEGP…LVDC) and 998–1037 (NFCC…NHSG). Phosphoserine is present on S1121. HEAT repeat units lie at residues 1179–1217 (RVLP…QLKR) and 1354–1392 (DAFL…GSKH). The residue at position 1614 (S1614) is a Phosphoserine. HEAT repeat units lie at residues 1636–1674 (PHQV…YNLF) and 1680–1718 (EDAV…CNFL). The interval 1650–1738 (ARSSSWHARY…EQLCKTKLPK (89 aa)) is bromodomain-like (BRDL). S1746 bears the Phosphoserine mark.

The protein belongs to the BLM10 family. As to quaternary structure, homodimer. Interacts with the 20S and 26S proteasomes. Component of the spermatoproteasome, a form of the proteasome specifically found in testis.

The protein localises to the cytoplasm. It is found in the cytosol. It localises to the nucleus. The protein resides in the nucleus speckle. Associated component of the proteasome that specifically recognizes acetylated histones and promotes ATP- and ubiquitin-independent degradation of core histones during spermatogenesis and DNA damage response. Recognizes and binds acetylated histones via its bromodomain-like (BRDL) region and activates the proteasome by opening the gated channel for substrate entry. Binds to the core proteasome via its C-terminus, which occupies the same binding sites as the proteasomal ATPases, opening the closed structure of the proteasome via an active gating mechanism. Component of the spermatoproteasome, a form of the proteasome specifically found in testis: binds to acetylated histones and promotes degradation of histones, thereby participating actively to the exchange of histones during spermatogenesis. Also involved in DNA damage response in somatic cells, by promoting degradation of histones following DNA double-strand breaks. This Homo sapiens (Human) protein is Proteasome activator complex subunit 4.